The chain runs to 159 residues: UPF0262 protein TM1040_3562 (159 aa).

Positions 1-21 (MSRISQIELDDRNLPPPTPEI) are disordered.

The protein belongs to the UPF0262 family.

The polypeptide is UPF0262 protein TM1040_3562 (Ruegeria sp. (strain TM1040) (Silicibacter sp.)).